We begin with the raw amino-acid sequence, 401 residues long: Phosphoglycerate kinase (401 aa).

Residues 23 to 25, R38, 61 to 64, R120, and R153 contribute to the substrate site; these read DLN and HFGR. Residues K203, E325, and 355–358 contribute to the ATP site; that span reads GGDT.

Belongs to the phosphoglycerate kinase family. In terms of assembly, monomer.

The protein resides in the cytoplasm. The enzyme catalyses (2R)-3-phosphoglycerate + ATP = (2R)-3-phospho-glyceroyl phosphate + ADP. It functions in the pathway carbohydrate degradation; glycolysis; pyruvate from D-glyceraldehyde 3-phosphate: step 2/5. This chain is Phosphoglycerate kinase, found in Rhizobium johnstonii (strain DSM 114642 / LMG 32736 / 3841) (Rhizobium leguminosarum bv. viciae).